The chain runs to 273 residues: Kit ligand (273 aa).

The first 25 residues, 1-25 (MKKTQTWIITCIYLQLLLFNPLVKT), serve as a signal peptide directing secretion. Residue Gln26 is modified to Pyrrolidone carboxylic acid. Residues 26 to 214 (QEICRNPVTD…AKSPEDPGLQ (189 aa)) lie on the Extracellular side of the membrane. 2 disulfides stabilise this stretch: Cys29–Cys114 and Cys68–Cys163. N-linked (GlcNAc...) asparagine; partial glycosylation is present at Asn90. Asn145 is a glycosylation site (N-linked (GlcNAc...) asparagine). Residue Ser167 is glycosylated (O-linked (GalNAc...) serine). 2 O-linked (GalNAc...) threonine glycosylation sites follow: Thr168 and Thr180. Positions 190–211 (ASSLRNDSSSSNRKAAKSPEDP) are disordered. Over residues 191–202 (SSLRNDSSSSNR) the composition is skewed to low complexity. Asn195 is a glycosylation site (N-linked (GlcNAc...) asparagine). A helical membrane pass occupies residues 215 to 237 (WTAMALPALISLVIGFAFGALYW). The Cytoplasmic portion of the chain corresponds to 238–273 (KKKQSSLTRAVENIQINEEDNEISMLQQKEREFQEV).

Belongs to the SCF family. In terms of assembly, homodimer, non-covalently linked. Heterotetramer with KIT, binding two KIT molecules; thereby mediates KIT dimerization and subsequent activation by autophosphorylation. A soluble form is produced by proteolytic processing of isoform 1 in the extracellular domain. Post-translationally, the identity of N- and O-linked saccharides is not reported in PubMed:1708771. The O-linked polysaccharides are probably the mucin type linked to GalNAc.

It localises to the cell membrane. Its subcellular location is the cytoplasm. The protein localises to the cytoskeleton. The protein resides in the cell projection. It is found in the lamellipodium. It localises to the filopodium. Its subcellular location is the secreted. Functionally, ligand for the receptor-type protein-tyrosine kinase KIT. Plays an essential role in the regulation of cell survival and proliferation, hematopoiesis, stem cell maintenance, gametogenesis, mast cell development, migration and function, and in melanogenesis. KITLG/SCF binding can activate several signaling pathways. Promotes phosphorylation of PIK3R1, the regulatory subunit of phosphatidylinositol 3-kinase, and subsequent activation of the kinase AKT1. KITLG/SCF and KIT also transmit signals via GRB2 and activation of RAS, RAF1 and the MAP kinases MAPK1/ERK2 and/or MAPK3/ERK1. KITLG/SCF and KIT promote activation of STAT family members STAT1, STAT3 and STAT5. KITLG/SCF and KIT promote activation of PLCG1, leading to the production of the cellular signaling molecules diacylglycerol and inositol 1,4,5-trisphosphate. KITLG/SCF acts synergistically with other cytokines, probably interleukins. In Rattus norvegicus (Rat), this protein is Kit ligand (Kitlg).